The chain runs to 308 residues: Sulfoquinovosyl glycerol transport system permease protein SmoG (308 aa).

6 consecutive transmembrane segments (helical) span residues 28–48, 92–112, 126–146, 164–184, 223–243, and 279–299; these read LAVLLLAPAAILLSLIIVYPV, VLITLITVPGALFMGLGLALL, SLLIPWALPLSFAGLIFAWFF, GIIWFNSPNWAFAAICLTIIW, ITLPLLKPSIVVALIFRTITA, and LGYGSALAVVMFALSMCVTAV. An ABC transmembrane type-1 domain is found at 88 to 300; the sequence is TWNTVLITLI…ALSMCVTAVY (213 aa).

Belongs to the binding-protein-dependent transport system permease family. As to quaternary structure, the complex is probably composed of two ATP-binding proteins (SmoE), two transmembrane proteins (SmoG and SmoH) and a solute-binding protein (SmoF).

It is found in the cell inner membrane. Part of the ABC transporter complex SmoEFGH involved in sulfoquinovosyl glycerol (SQGro) uptake. Responsible for the translocation of the substrate across the membrane. The polypeptide is Sulfoquinovosyl glycerol transport system permease protein SmoG (Agrobacterium fabrum (strain C58 / ATCC 33970) (Agrobacterium tumefaciens (strain C58))).